A 157-amino-acid polypeptide reads, in one-letter code: 3-dehydroquinate dehydratase (157 aa).

Catalysis depends on Tyr-24, which acts as the Proton acceptor. Residues Asn-75, His-81, and Asp-88 each coordinate substrate. His-101 (proton donor) is an active-site residue. Residues 102–103 and Arg-112 each bind substrate; that span reads LS.

Belongs to the type-II 3-dehydroquinase family. As to quaternary structure, homododecamer.

The enzyme catalyses 3-dehydroquinate = 3-dehydroshikimate + H2O. It functions in the pathway metabolic intermediate biosynthesis; chorismate biosynthesis; chorismate from D-erythrose 4-phosphate and phosphoenolpyruvate: step 3/7. In terms of biological role, catalyzes a trans-dehydration via an enolate intermediate. The chain is 3-dehydroquinate dehydratase from Brucella canis (strain ATCC 23365 / NCTC 10854 / RM-666).